Here is a 177-residue protein sequence, read N- to C-terminus: Dual-action ribosomal maturation protein DarP (177 aa).

Basic and acidic residues predominate over residues 1–12 (MKIVGDSEHFKQ). Residues 1 to 26 (MKIVGDSEHFKQPYDSNDEYVSKTED) form a disordered region.

The protein belongs to the DarP family.

It is found in the cytoplasm. In terms of biological role, member of a network of 50S ribosomal subunit biogenesis factors which assembles along the 30S-50S interface, preventing incorrect 23S rRNA structures from forming. Promotes peptidyl transferase center (PTC) maturation. The sequence is that of Dual-action ribosomal maturation protein DarP from Shewanella oneidensis (strain ATCC 700550 / JCM 31522 / CIP 106686 / LMG 19005 / NCIMB 14063 / MR-1).